Reading from the N-terminus, the 42-residue chain is Delta-hexatoxin-Iw1a (42 aa).

Cystine bridges form between cysteine 1–cysteine 15, cysteine 8–cysteine 20, cysteine 14–cysteine 31, and cysteine 16–cysteine 42.

Belongs to the neurotoxin 06 (delta-actx) family. As to expression, expressed by the venom gland.

The protein localises to the secreted. In terms of biological role, inhibits tetrodotoxin-sensitive sodium channels by binding to site 3. It slows the inactivation, causes a prolongation of action potential duration resulting in repetitive firing in autonomic and motor nerve fibers. Does not depolarize the resting potential. Does not affect tetrodotoxin-resistant sodium channels. This lethal neurotoxin is active on both insect and mammalian voltage-gated sodium channels (Nav). The sequence is that of Delta-hexatoxin-Iw1a from Illawarra wisharti (Illawarra funnel-web spider).